A 136-amino-acid chain; its full sequence is UPF0216 protein PYRAB16100 (136 aa).

The protein belongs to the UPF0216 family.

The protein is UPF0216 protein PYRAB16100 of Pyrococcus abyssi (strain GE5 / Orsay).